The following is a 103-amino-acid chain: Large ribosomal subunit protein bL21 (103 aa).

The protein belongs to the bacterial ribosomal protein bL21 family. As to quaternary structure, part of the 50S ribosomal subunit. Contacts protein L20.

In terms of biological role, this protein binds to 23S rRNA in the presence of protein L20. The chain is Large ribosomal subunit protein bL21 from Lactobacillus johnsonii (strain CNCM I-12250 / La1 / NCC 533).